A 66-amino-acid polypeptide reads, in one-letter code: MIIPIRCFTCGAVVADKWEPFSNRVMGGEDPEKVLTELGVNRYCCRRMLLSHVNIIREIIHYTRPI.

4 residues coordinate Zn(2+): cysteine 7, cysteine 10, cysteine 44, and cysteine 45.

This sequence belongs to the archaeal Rpo10/eukaryotic RPB10 RNA polymerase subunit family. In terms of assembly, part of the 13-subunit RNA polymerase complex. Zn(2+) serves as cofactor.

It localises to the cytoplasm. The catalysed reaction is RNA(n) + a ribonucleoside 5'-triphosphate = RNA(n+1) + diphosphate. Its function is as follows. DNA-dependent RNA polymerase (RNAP) catalyzes the transcription of DNA into RNA using the four ribonucleoside triphosphates as substrates. This Sulfolobus acidocaldarius (strain ATCC 33909 / DSM 639 / JCM 8929 / NBRC 15157 / NCIMB 11770) protein is DNA-directed RNA polymerase subunit Rpo10.